A 133-amino-acid chain; its full sequence is FPRL1 inhibitory protein (133 aa).

Residues Met1–Ala28 form the signal peptide.

It belongs to the CHIPS/FLIPr family.

The protein resides in the secreted. Its function is as follows. May be involved in countering the first line of host defense mechanisms. Impairs the leukocyte response to FPRL1 agonists by binding directly to host FPRL1. The polypeptide is FPRL1 inhibitory protein (flr) (Staphylococcus aureus (strain USA300)).